Consider the following 206-residue polypeptide: FMN-dependent NADH:quinone oxidoreductase 1 (206 aa).

FMN is bound by residues Ser-9, Ser-15–Ser-17, and Ser-139–Gly-142.

It belongs to the azoreductase type 1 family. In terms of assembly, homodimer. FMN serves as cofactor.

The catalysed reaction is 2 a quinone + NADH + H(+) = 2 a 1,4-benzosemiquinone + NAD(+). The enzyme catalyses N,N-dimethyl-1,4-phenylenediamine + anthranilate + 2 NAD(+) = 2-(4-dimethylaminophenyl)diazenylbenzoate + 2 NADH + 2 H(+). Its function is as follows. Quinone reductase that provides resistance to thiol-specific stress caused by electrophilic quinones. Also exhibits azoreductase activity. Catalyzes the reductive cleavage of the azo bond in aromatic azo compounds to the corresponding amines. This chain is FMN-dependent NADH:quinone oxidoreductase 1, found in Cupriavidus pinatubonensis (strain JMP 134 / LMG 1197) (Cupriavidus necator (strain JMP 134)).